The primary structure comprises 157 residues: SsrA-binding protein (157 aa).

Over residues 136 to 151 the composition is skewed to basic and acidic residues; the sequence is KRETEKKRDWSREKGR. Residues 136–157 form a disordered region; the sequence is KRETEKKRDWSREKGRLLRARG.

This sequence belongs to the SmpB family.

The protein resides in the cytoplasm. Required for rescue of stalled ribosomes mediated by trans-translation. Binds to transfer-messenger RNA (tmRNA), required for stable association of tmRNA with ribosomes. tmRNA and SmpB together mimic tRNA shape, replacing the anticodon stem-loop with SmpB. tmRNA is encoded by the ssrA gene; the 2 termini fold to resemble tRNA(Ala) and it encodes a 'tag peptide', a short internal open reading frame. During trans-translation Ala-aminoacylated tmRNA acts like a tRNA, entering the A-site of stalled ribosomes, displacing the stalled mRNA. The ribosome then switches to translate the ORF on the tmRNA; the nascent peptide is terminated with the 'tag peptide' encoded by the tmRNA and targeted for degradation. The ribosome is freed to recommence translation, which seems to be the essential function of trans-translation. The protein is SsrA-binding protein of Rhodopseudomonas palustris (strain HaA2).